We begin with the raw amino-acid sequence, 194 residues long: UPF0301 protein BT_0659 (194 aa).

Belongs to the UPF0301 (AlgH) family.

In Bartonella tribocorum (strain CIP 105476 / IBS 506), this protein is UPF0301 protein BT_0659.